Here is a 217-residue protein sequence, read N- to C-terminus: Ras-related protein RABA1g (217 aa).

Residue 20 to 27 participates in GTP binding; the sequence is GDSGVGKS. Positions 42–50 match the Effector region motif; the sequence is SKSTIGVEF. GTP-binding positions include 68–72, 126–129, and 156–157; these read DTAGQ, NKAD, and SA. 2 S-geranylgeranyl cysteine lipidation sites follow: cysteine 214 and cysteine 215.

This sequence belongs to the small GTPase superfamily. Rab family.

The protein localises to the cell membrane. Intracellular vesicle trafficking and protein transport. The chain is Ras-related protein RABA1g (RABA1G) from Arabidopsis thaliana (Mouse-ear cress).